Consider the following 295-residue polypeptide: Protein PAR32 (295 aa).

An N-acetylalanine modification is found at Ala-2. Phosphoserine occurs at positions 36, 39, 47, 123, 138, 141, and 147. Positions 134-153 are enriched in polar residues; the sequence is SATRSHQSLHATTSSPNNNA. Disordered stretches follow at residues 134–156 and 217–295; these read SATRSHQSLHATTSSPNNNAPIV and TSKK…TMFN. A compositionally biased stretch (basic residues) spans 217-227; the sequence is TSKKPKNKLKG. Ser-246 is modified (phosphoserine). Polar residues predominate over residues 246–256; the sequence is SPKSSRNTINH. Basic and acidic residues predominate over residues 265-274; it reads KFNLKDDNGK. Basic residues predominate over residues 275–284; sequence EKKKKKKKKS. Low complexity predominate over residues 285–295; sequence GFFSSLKTMFN.

Hyperphosphorylated after treatment with rapamycin in a TAP42-dependent manner.

The protein resides in the cytoplasm. Involved in resistance to cisplatin. This Saccharomyces cerevisiae (strain ATCC 204508 / S288c) (Baker's yeast) protein is Protein PAR32 (PAR32).